Here is a 68-residue protein sequence, read N- to C-terminus: Protein SlyX homolog (68 aa).

The protein belongs to the SlyX family.

This Pseudomonas putida (strain ATCC 700007 / DSM 6899 / JCM 31910 / BCRC 17059 / LMG 24140 / F1) protein is Protein SlyX homolog.